A 272-amino-acid polypeptide reads, in one-letter code: ATP synthase subunit a (272 aa).

6 helical membrane passes run 42 to 62, 108 to 128, 140 to 162, 177 to 197, 219 to 239, and 241 to 261; these read IDSL…AGFV, FVWI…LPCI, ILPS…LMIF, LIYH…LEII, LIFI…LSVP, and AIFH…LTII.

It belongs to the ATPase A chain family. In terms of assembly, F-type ATPases have 2 components, CF(1) - the catalytic core - and CF(0) - the membrane proton channel. CF(1) has five subunits: alpha(3), beta(3), gamma(1), delta(1), epsilon(1). CF(0) has three main subunits: a(1), b(2) and c(9-12). The alpha and beta chains form an alternating ring which encloses part of the gamma chain. CF(1) is attached to CF(0) by a central stalk formed by the gamma and epsilon chains, while a peripheral stalk is formed by the delta and b chains.

It localises to the cell inner membrane. Functionally, key component of the proton channel; it plays a direct role in the translocation of protons across the membrane. In Blochmanniella floridana, this protein is ATP synthase subunit a.